Here is a 183-residue protein sequence, read N- to C-terminus: Inner membrane protein YgjV (183 aa).

Residues 1–2 (MT) are Periplasmic-facing. The chain crosses the membrane as a helical span at residues 3–23 (AYWLAQGVGVIAFLIGITTFF). Residues 24-38 (NRDERRFKKQLSVYS) lie on the Cytoplasmic side of the membrane. The chain crosses the membrane as a helical span at residues 39 to 59 (AVIGVHFFLLGTYPAGASAIL). Residues 60–71 (NAIRTLITLRTR) are Periplasmic-facing. Transmembrane regions (helical) follow at residues 72 to 92 (SLWV…AKFH) and 93 to 113 (HPVE…LFCC). Residues 114-133 (KGLTMRCVMWFSTCCWVIHN) lie on the Periplasmic side of the membrane. The helical transmembrane segment at 134 to 154 (FWAGSIGGTMIEGSFLLMNGL) threads the bilayer. Over 155–183 (NIIRFWRMQKRGIDPFKVEKTPSAVDERG) the chain is Cytoplasmic.

The protein localises to the cell inner membrane. The protein is Inner membrane protein YgjV (ygjV) of Escherichia coli (strain K12).